The primary structure comprises 891 residues: Alanine--tRNA ligase (891 aa).

Positions 564, 568, 677, and 681 each coordinate Zn(2+).

It belongs to the class-II aminoacyl-tRNA synthetase family. Zn(2+) is required as a cofactor.

It is found in the cytoplasm. It catalyses the reaction tRNA(Ala) + L-alanine + ATP = L-alanyl-tRNA(Ala) + AMP + diphosphate. Catalyzes the attachment of alanine to tRNA(Ala) in a two-step reaction: alanine is first activated by ATP to form Ala-AMP and then transferred to the acceptor end of tRNA(Ala). Also edits incorrectly charged Ser-tRNA(Ala) and Gly-tRNA(Ala) via its editing domain. The protein is Alanine--tRNA ligase of Rhodopseudomonas palustris (strain BisA53).